The primary structure comprises 345 residues: Cuticle collagen 14 (345 aa).

3 triple-helical region regions span residues 156 to 185, 207 to 263, and 268 to 333; these read GPPG…PGPP, GDGG…PGTY, and GPAG…PGSC. Positions 161 to 345 are disordered; that stretch reads AGDGGRDGAD…CPPARLAPGY (185 aa). Pro residues-rich tracts occupy residues 179 to 191, 198 to 223, and 278 to 290; these read IGPP…PGPD, PQCP…PPGA, and RPGP…PAGP. The segment covering 292–304 has biased composition (gly residues); it reads GENGKGGGQGPSG.

This sequence belongs to the cuticular collagen family. Collagen polypeptide chains are complexed within the cuticle by disulfide bonds and other types of covalent cross-links.

Nematode cuticles are composed largely of collagen-like proteins. The cuticle functions both as an exoskeleton and as a barrier to protect the worm from its environment. This is Cuticle collagen 14 (col-14) from Caenorhabditis elegans.